The following is a 442-amino-acid chain: MENAKMNSLIAQYPLVKDLVALKETTWFNPSTTSLAEGLPYVGLTEQDVQDAHARLSRFAPYLAKAFAETAATGGIIESELVAIPAMQKRLEKEYQQPISGQLLLKKDSHLPISGSIKARGGIYEVLAHAEKLALEAGLLTLDDDYSKLLSPEFKQFFSQYSIAVGSTGNLGLSIGIMSARIGFKVTVHMSADARAWKKAKLRSHGVTVVEYEQDYGVAVEEGRKAAQSDPNCFFIDDENSRTLFLGYSVAGQRLKAQFAQQGRIVDADNPLFVYLPCGVGGGPGGVAFGLKLAFGDHVHCFFAEPTHSPCMLLGVHTGLHDQISVQDIGIDNLTAADGLAVGRASCFVGRAMERLLDGFYTLSDQTMYDMLGWLAQEEGIRLEPSALAGMAGPQRVCASVSYQQMHGFSAEQLRNATHLVWATGGGMVPEEEMNQYLAKGR.

K118 is subject to N6-(pyridoxal phosphate)lysine.

The protein belongs to the serine/threonine dehydratase family. DsdA subfamily. Monomer. The cofactor is pyridoxal 5'-phosphate.

It carries out the reaction D-serine = pyruvate + NH4(+). This is D-serine dehydratase from Shigella flexneri.